We begin with the raw amino-acid sequence, 347 residues long: Hydroxymethylglutaryl-CoA synthase (347 aa).

Asp-29 and Ala-30 together coordinate (3S)-3-hydroxy-3-methylglutaryl-CoA. The active-site Proton donor/acceptor is the Glu-80. Residues Cys-112 and Thr-153 each contribute to the (3S)-3-hydroxy-3-methylglutaryl-CoA site. Residue Cys-112 is the Acyl-thioester intermediate of the active site. Arg-199 lines the CoA pocket. The (3S)-3-hydroxy-3-methylglutaryl-CoA site is built by Thr-201 and His-234. His-234 (proton donor/acceptor) is an active-site residue. Lys-239 contacts CoA. (3S)-3-hydroxy-3-methylglutaryl-CoA is bound by residues Arg-243, Asn-266, and Ser-296.

It belongs to the thiolase-like superfamily. Archaeal HMG-CoA synthase family. As to quaternary structure, interacts with acetoacetyl-CoA thiolase that catalyzes the precedent step in the pathway and with a DUF35 protein. The acetoacetyl-CoA thiolase/HMG-CoA synthase complex channels the intermediate via a fused CoA-binding site, which allows for efficient coupling of the endergonic thiolase reaction with the exergonic HMGCS reaction.

The enzyme catalyses acetoacetyl-CoA + acetyl-CoA + H2O = (3S)-3-hydroxy-3-methylglutaryl-CoA + CoA + H(+). It participates in metabolic intermediate biosynthesis; (R)-mevalonate biosynthesis; (R)-mevalonate from acetyl-CoA: step 2/3. Its function is as follows. Catalyzes the condensation of acetyl-CoA with acetoacetyl-CoA to form 3-hydroxy-3-methylglutaryl-CoA (HMG-CoA). Functions in the mevalonate (MVA) pathway leading to isopentenyl diphosphate (IPP), a key precursor for the biosynthesis of isoprenoid compounds that are building blocks of archaeal membrane lipids. The polypeptide is Hydroxymethylglutaryl-CoA synthase (Methanocella arvoryzae (strain DSM 22066 / NBRC 105507 / MRE50)).